A 1041-amino-acid chain; its full sequence is Importin-9 (1041 aa).

Ala2 is subject to N-acetylalanine. Residues 43-119 (AEEQIKVLEV…RELLPNGLRE (77 aa)) form the Importin N-terminal domain. Residues 936 to 967 (QATPAEWSQDDSNDMWEDQEEEEEEEEDGLAG) are disordered. Positions 943–964 (SQDDSNDMWEDQEEEEEEEEDG) are enriched in acidic residues.

The protein belongs to the importin beta family. Interacts with histones H2A, H2B, H3 and H4. The binding is coupled to RanGTP cycles. Interacts with AKIRIN2; promoting association with pre-assembled proteasomes. Associates with pre-assembled proteasomes; interaction is indirect and mediated via interaction with AKIRIN2. Interacts with PPP2R1A and PPP2R1B.

It is found in the cytoplasm. It localises to the nucleus. Nuclear transport receptor that mediates nuclear import of proteins, such as histones, proteasome and actin. Serves as receptor for nuclear localization signals (NLS) in cargo substrates. Is thought to mediate docking of the importin/substrate complex to the nuclear pore complex (NPC) through binding to nucleoporin and the complex is subsequently translocated through the pore by an energy requiring, Ran-dependent mechanism. At the nucleoplasmic side of the NPC, Ran binds to the importin, the importin/substrate complex dissociates and importin is re-exported from the nucleus to the cytoplasm where GTP hydrolysis releases Ran. The directionality of nuclear import is thought to be conferred by an asymmetric distribution of the GTP- and GDP-bound forms of Ran between the cytoplasm and nucleus. Mediates the import of pre-assembled proteasomes into the nucleus; AKIRIN2 acts as a molecular bridge between IPO9 and the proteasome complex. Mediates the nuclear import of histones H2A, H2B, H4 and H4. In addition to nuclear import, also acts as a chaperone for histones by preventing inappropriate non-nucleosomal interactions. Mediates the nuclear import of actin. This is Importin-9 from Homo sapiens (Human).